The following is a 318-amino-acid chain: Non-homologous end joining protein Ku (318 aa).

The Ku domain occupies 10–193 (AFGLVNVPVK…EVQIKPAELK (184 aa)). The disordered stretch occupies residues 259–318 (SVKARKGGKSDSKDDSDSESDSKESKSDSKPAKKAPAKKAAAKKSTAKKAPAKKAAAKKS). Over residues 266–289 (GKSDSKDDSDSESDSKESKSDSKP) the composition is skewed to basic and acidic residues. The span at 290–318 (AKKAPAKKAAAKKSTAKKAPAKKAAAKKS) shows a compositional bias: basic residues.

It belongs to the prokaryotic Ku family. In terms of assembly, homodimer. Interacts with Sir2 and probably also with LigD; may form a trimeric complex during NHEJ.

Functionally, with LigD forms a non-homologous end joining (NHEJ) repair enzyme which repairs blunt-end and 5'-overhang double strand breaks (DSB) with about 50% fidelity, and DSB with non-complementary 3' ends. Plays a partial role in NHEJ on 3'-overhang repair of complementary ends. NHEJ repairs DSB with blunt ends and 5' overhangs with a high level of nucleotide insertion/deletion, without a need for microhomology. This protein but not LigD also suppresses homologous recombination. Overexpression dramatically increases the efficiency of NHEJ with no effect on repair fidelity. This is Non-homologous end joining protein Ku from Mycolicibacterium smegmatis (strain ATCC 700084 / mc(2)155) (Mycobacterium smegmatis).